The sequence spans 412 residues: ATP phosphoribosyltransferase regulatory subunit (412 aa).

It belongs to the class-II aminoacyl-tRNA synthetase family. HisZ subfamily. In terms of assembly, heteromultimer composed of HisG and HisZ subunits.

The protein resides in the cytoplasm. It participates in amino-acid biosynthesis; L-histidine biosynthesis; L-histidine from 5-phospho-alpha-D-ribose 1-diphosphate: step 1/9. Functionally, required for the first step of histidine biosynthesis. May allow the feedback regulation of ATP phosphoribosyltransferase activity by histidine. In Dehalococcoides mccartyi (strain ATCC BAA-2266 / KCTC 15142 / 195) (Dehalococcoides ethenogenes (strain 195)), this protein is ATP phosphoribosyltransferase regulatory subunit.